The chain runs to 350 residues: 4-hydroxy-2-oxovalerate aldolase 3 (350 aa).

The Pyruvate carboxyltransferase domain occupies 13-265 (VVFHDMCLRD…DTGVDLFRLM (253 aa)). 21–22 (RD) serves as a coordination point for substrate. Mn(2+) is bound at residue Asp22. Residue His25 is the Proton acceptor of the active site. Substrate-binding residues include Ser175 and His204. Residues His204 and His206 each contribute to the Mn(2+) site. Residue Tyr295 coordinates substrate.

Belongs to the 4-hydroxy-2-oxovalerate aldolase family.

It catalyses the reaction (S)-4-hydroxy-2-oxopentanoate = acetaldehyde + pyruvate. This Azotobacter vinelandii (strain DJ / ATCC BAA-1303) protein is 4-hydroxy-2-oxovalerate aldolase 3 (lapG).